The following is a 360-amino-acid chain: Chorismate synthase (360 aa).

NADP(+) is bound at residue Arg48. FMN contacts are provided by residues 125–127, 242–243, Gly286, 301–305, and Arg327; these read RSS, NA, and KPTSS.

The protein belongs to the chorismate synthase family. Homotetramer. The cofactor is FMNH2.

It catalyses the reaction 5-O-(1-carboxyvinyl)-3-phosphoshikimate = chorismate + phosphate. It participates in metabolic intermediate biosynthesis; chorismate biosynthesis; chorismate from D-erythrose 4-phosphate and phosphoenolpyruvate: step 7/7. Functionally, catalyzes the anti-1,4-elimination of the C-3 phosphate and the C-6 proR hydrogen from 5-enolpyruvylshikimate-3-phosphate (EPSP) to yield chorismate, which is the branch point compound that serves as the starting substrate for the three terminal pathways of aromatic amino acid biosynthesis. This reaction introduces a second double bond into the aromatic ring system. The chain is Chorismate synthase from Pelagibacter ubique (strain HTCC1062).